The sequence spans 489 residues: Putative L,D-transpeptidase HI_1667 (489 aa).

Residues 10–29 (LSLFALSLSMMMSGCVLVGL) traverse the membrane as a helical segment. The 180-residue stretch at 254 to 433 (NGIFVNIPSY…ETRKNTVLAS (180 aa)) folds into the L,D-TPase catalytic domain. H384 serves as the catalytic Proton donor/acceptor. C403 serves as the catalytic Nucleophile.

It belongs to the YkuD family.

The protein resides in the membrane. It functions in the pathway cell wall biogenesis; peptidoglycan biosynthesis. This Haemophilus influenzae (strain ATCC 51907 / DSM 11121 / KW20 / Rd) protein is Putative L,D-transpeptidase HI_1667.